Reading from the N-terminus, the 314-residue chain is Homoserine O-acetyltransferase (314 aa).

The Acyl-thioester intermediate role is filled by Cys-142. Substrate contacts are provided by Lys-163 and Ser-192. His-235 functions as the Proton acceptor in the catalytic mechanism. Glu-237 is a catalytic residue. Residue Arg-249 coordinates substrate.

This sequence belongs to the MetA family.

The protein resides in the cytoplasm. The enzyme catalyses L-homoserine + acetyl-CoA = O-acetyl-L-homoserine + CoA. The protein operates within amino-acid biosynthesis; L-methionine biosynthesis via de novo pathway; O-acetyl-L-homoserine from L-homoserine: step 1/1. Its function is as follows. Transfers an acetyl group from acetyl-CoA to L-homoserine, forming acetyl-L-homoserine. The sequence is that of Homoserine O-acetyltransferase from Streptococcus thermophilus (strain ATCC BAA-491 / LMD-9).